Consider the following 212-residue polypeptide: Large ribosomal subunit protein uL3 (212 aa).

This sequence belongs to the universal ribosomal protein uL3 family. Part of the 50S ribosomal subunit. Forms a cluster with proteins L14 and L19.

One of the primary rRNA binding proteins, it binds directly near the 3'-end of the 23S rRNA, where it nucleates assembly of the 50S subunit. The chain is Large ribosomal subunit protein uL3 from Ruminiclostridium cellulolyticum (strain ATCC 35319 / DSM 5812 / JCM 6584 / H10) (Clostridium cellulolyticum).